The chain runs to 947 residues: Isoleucine--tRNA ligase (947 aa).

A 'HIGH' region motif is present at residues 57–67 (PYANGNIHLGH). Glu-568 contributes to the L-isoleucyl-5'-AMP binding site. Residues 609–613 (KMSKS) carry the 'KMSKS' region motif. Lys-612 contributes to the ATP binding site. Residues Cys-908, Cys-911, Cys-926, and Cys-929 each coordinate Zn(2+).

The protein belongs to the class-I aminoacyl-tRNA synthetase family. IleS type 1 subfamily. Monomer. Zn(2+) is required as a cofactor.

The protein resides in the cytoplasm. The catalysed reaction is tRNA(Ile) + L-isoleucine + ATP = L-isoleucyl-tRNA(Ile) + AMP + diphosphate. In terms of biological role, catalyzes the attachment of isoleucine to tRNA(Ile). As IleRS can inadvertently accommodate and process structurally similar amino acids such as valine, to avoid such errors it has two additional distinct tRNA(Ile)-dependent editing activities. One activity is designated as 'pretransfer' editing and involves the hydrolysis of activated Val-AMP. The other activity is designated 'posttransfer' editing and involves deacylation of mischarged Val-tRNA(Ile). This Persephonella marina (strain DSM 14350 / EX-H1) protein is Isoleucine--tRNA ligase.